The primary structure comprises 270 residues: Homeobox protein pal-1 (270 aa).

3 disordered regions span residues Met-1–Pro-24, Val-96–Ala-130, and Leu-175–Val-201. 2 stretches are compositionally biased toward low complexity: residues Ser-14–Pro-24 and Ser-101–Ala-130. Positions Ala-206–Lys-265 form a DNA-binding region, homeobox.

It belongs to the Caudal homeobox family. As to quaternary structure, interacts with tir-1 and let-756. Blastomeres. Embryo. Oocytes.

It localises to the nucleus. The protein localises to the chromosome. The protein resides in the centromere. Its subcellular location is the kinetochore. Functionally, transcriptional activator. Interacts with promoter regions for tbx-8.9, tbx-9, elt-1, hnd-1, scrt-1, and vab-7 genes. Binds the sequence ATTTATGAC. Binds to the enhancer region of the hlh-1 gene promoter during embryonic body wall muscle development. Activates the gene for mab-5 in embryo development. Necessary for vab-7 expression in C blastomeres in the posterior of embryos. Required for posterior V6 neuroectoblast cell fate specification during postembryonic neurogenesis (patterning) which generates the characteristic ray lineage during male tail development. Binds to ced-3 promoter and activated expression which is crucial for tail-spike cell death. Has a role in E cell specification in endoderm development and body wall muscle development. This Caenorhabditis elegans protein is Homeobox protein pal-1 (pal-1).